We begin with the raw amino-acid sequence, 449 residues long: Ktr system potassium uptake protein D (449 aa).

10 helical membrane passes run 17 to 37 (LIAL…SLPA), 46 to 66 (TFID…LTVV), 75 to 95 (IGIF…MTLG), 133 to 153 (VLFL…TYFL), 194 to 214 (FVQF…PVLV), 235 to 255 (ITTI…FALE), 297 to 317 (LFFI…GGGI), 355 to 375 (LVVT…LTIT), 380 to 400 (LLEL…SLGI), and 411 to 431 (VIMI…YLIG).

The protein belongs to the TrkH potassium transport family. Ktr (TC 2.A.38.4) subfamily. In terms of assembly, homodimer. Part of the KtrCD complex formed by an octameric catalytic ring of KtrC and a membrane associated dimer of KtrD forming a potassium channel.

Its subcellular location is the cell membrane. Its function is as follows. Integral membrane subunit of the KtrCD potassium uptake transporter. The 2 major potassium transporter complexes KtrAB and KtrCD confer resistance to both suddenly imposed and prolonged osmotic stress. This Bacillus subtilis (strain 168) protein is Ktr system potassium uptake protein D (ktrD).